We begin with the raw amino-acid sequence, 548 residues long: T-complex protein 1 subunit alpha (548 aa).

Belongs to the TCP-1 chaperonin family. Heterooligomeric complex of about 850 to 900 kDa that forms two stacked rings, 12 to 16 nm in diameter.

The protein resides in the cytoplasm. Its function is as follows. Molecular chaperone; assists the folding of proteins upon ATP hydrolysis. Known to play a role, in vitro, in the folding of actin and tubulin. The sequence is that of T-complex protein 1 subunit alpha (tcp1) from Dictyostelium discoideum (Social amoeba).